A 91-amino-acid chain; its full sequence is MTRSLKKGPFVDHHLLAKVEKAVATKDKKPVKTWSRRSMVLPEFIGLTIAVHNGKQHVPVYVTDQMVGHKLGEFALTRTFKGHPADKKVKK.

It belongs to the universal ribosomal protein uS19 family.

Its function is as follows. Protein S19 forms a complex with S13 that binds strongly to the 16S ribosomal RNA. The chain is Small ribosomal subunit protein uS19 from Verminephrobacter eiseniae (strain EF01-2).